We begin with the raw amino-acid sequence, 460 residues long: Glycine--tRNA ligase (460 aa).

Positions 98 and 172 each coordinate substrate. ATP-binding positions include 204-206 (RNE), 214-219 (FRTREF), 288-289 (EL), and 332-335 (GADR). 219–223 (FEQME) is a binding site for substrate. 328–332 (EPSLG) contributes to the substrate binding site.

It belongs to the class-II aminoacyl-tRNA synthetase family. Homodimer.

Its subcellular location is the cytoplasm. The enzyme catalyses tRNA(Gly) + glycine + ATP = glycyl-tRNA(Gly) + AMP + diphosphate. Functionally, catalyzes the attachment of glycine to tRNA(Gly). The polypeptide is Glycine--tRNA ligase (Geobacillus kaustophilus (strain HTA426)).